We begin with the raw amino-acid sequence, 441 residues long: ATP-dependent RNA helicase RhlB (441 aa).

The Q motif signature appears at 9–37 (QKFADFSLNKEIKTALNESGFEFCTPIQA). One can recognise a Helicase ATP-binding domain in the interval 40-219 (LPILLQKKDI…YDHMNEPEKV (180 aa)). 53–60 (AQTGTGKT) serves as a coordination point for ATP. The DEAD box signature appears at 165-168 (DEAD). One can recognise a Helicase C-terminal domain in the interval 243–390 (KMRLLLSLIE…VTNYDSEGLL (148 aa)). The disordered stretch occupies residues 401 to 441 (RKHNNRPQQGRNNSGRPQGRNGNRAGGRNGPRRHDQVRRHS).

Belongs to the DEAD box helicase family. RhlB subfamily. In terms of assembly, component of the RNA degradosome, which is a multiprotein complex involved in RNA processing and mRNA degradation.

It localises to the cytoplasm. It catalyses the reaction ATP + H2O = ADP + phosphate + H(+). Functionally, DEAD-box RNA helicase involved in RNA degradation. Has RNA-dependent ATPase activity and unwinds double-stranded RNA. This is ATP-dependent RNA helicase RhlB from Shewanella woodyi (strain ATCC 51908 / MS32).